Here is a 387-residue protein sequence, read N- to C-terminus: 3-hydroxyisobutyryl-CoA hydrolase-like protein 5 (387 aa).

Ala-2 carries the post-translational modification N-acetylalanine.

The protein belongs to the enoyl-CoA hydratase/isomerase family.

This is 3-hydroxyisobutyryl-CoA hydrolase-like protein 5 from Arabidopsis thaliana (Mouse-ear cress).